The following is a 382-amino-acid chain: Small ribosomal subunit protein mS35 (382 aa).

A compositionally biased stretch (gly residues) spans 363-375; sequence GRGGKALPGGKGG. Positions 363–382 are disordered; it reads GRGGKALPGGKGGKMQRSKR.

This sequence belongs to the mitochondrion-specific ribosomal protein mS35 family. In terms of assembly, component of the mitochondrial small ribosomal subunit (mt-SSU). Mature N.crassa 74S mitochondrial ribosomes consist of a small (37S) and a large (54S) subunit. The 37S small subunit contains a 16S ribosomal RNA (16S mt-rRNA) and 32 different proteins. The 54S large subunit contains a 23S rRNA (23S mt-rRNA) and 42 different proteins.

The protein localises to the mitochondrion. In terms of biological role, component of the mitochondrial ribosome (mitoribosome), a dedicated translation machinery responsible for the synthesis of mitochondrial genome-encoded proteins, including at least some of the essential transmembrane subunits of the mitochondrial respiratory chain. The mitoribosomes are attached to the mitochondrial inner membrane and translation products are cotranslationally integrated into the membrane. In Neurospora crassa (strain ATCC 24698 / 74-OR23-1A / CBS 708.71 / DSM 1257 / FGSC 987), this protein is Small ribosomal subunit protein mS35 (rsm24).